Reading from the N-terminus, the 156-residue chain is MKLNDLRDKPGSVKARKRVGRGIGSGTGKTGGRGVKGQKSRSGVAINGFEGGQMPIYRRLPKRGFTNIFAKSFNVVSLGRVQAAIDAGKLDAKAVVNLDSLKAAGVIRRAKDGVRILSDGELKAKVAFEVAGASKAAVEKIEKAGGSIKLPEAAAE.

The segment covering 1–11 (MKLNDLRDKPG) has biased composition (basic and acidic residues). The interval 1 to 40 (MKLNDLRDKPGSVKARKRVGRGIGSGTGKTGGRGVKGQKS) is disordered. Residues 21 to 35 (RGIGSGTGKTGGRGV) are compositionally biased toward gly residues.

It belongs to the universal ribosomal protein uL15 family. Part of the 50S ribosomal subunit.

In terms of biological role, binds to the 23S rRNA. This is Large ribosomal subunit protein uL15 from Brucella anthropi (strain ATCC 49188 / DSM 6882 / CCUG 24695 / JCM 21032 / LMG 3331 / NBRC 15819 / NCTC 12168 / Alc 37) (Ochrobactrum anthropi).